A 151-amino-acid chain; its full sequence is Large ribosomal subunit protein uL15 (151 aa).

The disordered stretch occupies residues 1–45 (MNLSSLKPVKGSTKTCKRVGRGQGSGCGGTSTRGHKGQKSRSGYS). Over residues 21-31 (RGQGSGCGGTS) the composition is skewed to gly residues.

The protein belongs to the universal ribosomal protein uL15 family. Part of the 50S ribosomal subunit.

Binds to the 23S rRNA. This Azobacteroides pseudotrichonymphae genomovar. CFP2 protein is Large ribosomal subunit protein uL15.